The chain runs to 192 residues: Small ribosomal subunit protein eS7 (192 aa).

The protein belongs to the eukaryotic ribosomal protein eS7 family.

This Secale cereale (Rye) protein is Small ribosomal subunit protein eS7 (RPS7).